A 298-amino-acid chain; its full sequence is Ribosomal protein uL3 glutamine methyltransferase (298 aa).

This sequence belongs to the protein N5-glutamine methyltransferase family. PrmB subfamily.

The catalysed reaction is L-glutaminyl-[ribosomal protein uL3] + S-adenosyl-L-methionine = N(5)-methyl-L-glutaminyl-[ribosomal protein uL3] + S-adenosyl-L-homocysteine + H(+). In terms of biological role, methylates large ribosomal subunit protein uL3 on a specific glutamine residue. The protein is Ribosomal protein uL3 glutamine methyltransferase of Bordetella pertussis (strain Tohama I / ATCC BAA-589 / NCTC 13251).